We begin with the raw amino-acid sequence, 310 residues long: Transcription factor LRL2 (310 aa).

Low complexity-rich tracts occupy residues 1–20 (MNSS…LQSP) and 104–126 (QTQT…QPQT). 2 disordered regions span residues 1 to 23 (MNSS…PATF) and 95 to 143 (FHLP…PHSI). Residues 136–149 (QATDPHSIAERLRR) form a basic motif; degenerate region. The 50-residue stretch at 136-185 (QATDPHSIAERLRRERIAERMKSLQELVPNGNKTDKASMLDEIIDYVKFL) folds into the bHLH domain. The segment at 150–185 (ERIAERMKSLQELVPNGNKTDKASMLDEIIDYVKFL) is helix-loop-helix motif. The segment at 203–225 (ASSQISEDAGGSHENTSSSGEAK) is disordered.

In terms of assembly, homodimer. As to expression, expressed constitutively in roots, leaves, stems, and flowers.

It localises to the nucleus. In terms of biological role, transcription factor that regulates the development of root hairs. Transcription factor that regulates the development of sperm cells. In Arabidopsis thaliana (Mouse-ear cress), this protein is Transcription factor LRL2.